The primary structure comprises 154 residues: MVKAVAVLRGDSKVSGTVTFEQDSESGPVTVTYDIKGNDPNAERGFHVHEFGDNTNGCTSAGPHFNPFKKNHGGPTDSERHVGDLGNVKTDSEGVAKGVLKDSLLKLTGDNSIVGRTVVIHGGEDDLGKGGHADSLKTGNAGPRPACGVIGLTA.

Residues His-47, His-49, and His-64 each contribute to the Cu cation site. A disulfide bridge connects residues Cys-58 and Cys-147. A disordered region spans residues 62–89; it reads GPHFNPFKKNHGGPTDSERHVGDLGNVK. Zn(2+) is bound by residues His-64, His-72, His-81, and Asp-84. His-121 lines the Cu cation pocket. Arg-144 is a substrate binding site.

Belongs to the Cu-Zn superoxide dismutase family. In terms of assembly, homodimer. The cofactor is Cu cation. Zn(2+) serves as cofactor.

It localises to the cytoplasm. The catalysed reaction is 2 superoxide + 2 H(+) = H2O2 + O2. In terms of biological role, destroys radicals which are normally produced within the cells and which are toxic to biological systems. The protein is Superoxide dismutase [Cu-Zn] (SOD1) of Yarrowia lipolytica (strain CLIB 122 / E 150) (Yeast).